The sequence spans 59 residues: Large ribosomal subunit protein uL30 (59 aa).

Belongs to the universal ribosomal protein uL30 family. Part of the 50S ribosomal subunit.

In Clostridium kluyveri (strain ATCC 8527 / DSM 555 / NBRC 12016 / NCIMB 10680 / K1), this protein is Large ribosomal subunit protein uL30.